A 166-amino-acid polypeptide reads, in one-letter code: Regulator of ribonuclease activity A (166 aa).

The protein belongs to the RraA family. Homotrimer. Binds to both RNA-binding sites in the C-terminal region of Rne and to RhlB.

It is found in the cytoplasm. Globally modulates RNA abundance by binding to RNase E (Rne) and regulating its endonucleolytic activity. Can modulate Rne action in a substrate-dependent manner by altering the composition of the degradosome. Modulates RNA-binding and helicase activities of the degradosome. The chain is Regulator of ribonuclease activity A from Glaesserella parasuis serovar 5 (strain SH0165) (Haemophilus parasuis).